The primary structure comprises 85 residues: Protein AC4 (85 aa).

Residue Gly-2 is the site of N-myristoyl glycine; by host attachment.

It belongs to the geminiviridae protein AC4/C4 family. As to quaternary structure, interacts with Arabidopsis thaliana ASK7/ASK-eta and ASK6/ASK-zeta proteins. In terms of processing, phosphorylated by Arabidopsis thaliana ASK7/ASK-eta mainly on threonine and serine residues.

Its subcellular location is the host cell membrane. Its function is as follows. Pathogenicity determinant. May act as a suppressor of RNA-mediated gene silencing, also known as post-transcriptional gene silencing (PTGS), a mechanism of plant viral defense that limits the accumulation of viral RNAs. May repress the AL61 promoter. This chain is Protein AC4, found in Solanum lycopersicum (Tomato).